Reading from the N-terminus, the 327-residue chain is Nucleotide-binding protein Mflv_3714 (327 aa).

Residues 1 to 22 show a composition bias toward basic and acidic residues; it reads MTRQGMRDDLRGEADSVVHDGT. The segment at 1–29 is disordered; that stretch reads MTRQGMRDDLRGEADSVVHDGTDDIDNEN. An ATP-binding site is contributed by 50 to 57; the sequence is GLSGAGRG. 101 to 104 provides a ligand contact to GTP; it reads DVRS.

It belongs to the RapZ-like family.

Its function is as follows. Displays ATPase and GTPase activities. This is Nucleotide-binding protein Mflv_3714 from Mycolicibacterium gilvum (strain PYR-GCK) (Mycobacterium gilvum (strain PYR-GCK)).